The following is a 309-amino-acid chain: L-lactate dehydrogenase 2 (309 aa).

NAD(+) contacts are provided by residues valine 16, aspartate 37, tyrosine 67, and 81-82 (GV). Arginine 90 lines the substrate pocket. Residue serine 103 participates in NAD(+) binding. 122–125 (NPVD) is a substrate binding site. Threonine 145 serves as a coordination point for NAD(+). 150 to 153 (DTAR) contributes to the substrate binding site. The active-site Proton acceptor is histidine 177. Position 227 (threonine 227) interacts with substrate.

The protein belongs to the LDH/MDH superfamily. LDH family. In terms of assembly, homotetramer.

It localises to the cytoplasm. It carries out the reaction (S)-lactate + NAD(+) = pyruvate + NADH + H(+). It participates in fermentation; pyruvate fermentation to lactate; (S)-lactate from pyruvate: step 1/1. Catalyzes the conversion of lactate to pyruvate. In Lactiplantibacillus plantarum (strain ATCC BAA-793 / NCIMB 8826 / WCFS1) (Lactobacillus plantarum), this protein is L-lactate dehydrogenase 2.